The sequence spans 69 residues: uncharacterized protein (69 aa).

This is an uncharacterized protein from Mycobacterium tuberculosis (strain ATCC 25618 / H37Rv).